A 298-amino-acid polypeptide reads, in one-letter code: N-acetylmuramic acid 6-phosphate etherase (298 aa).

Positions 55-218 (IHAQVSGGGR…STGLMIKSGK (164 aa)) constitute an SIS domain. Catalysis depends on E83, which acts as the Proton donor. The active site involves E114.

This sequence belongs to the GCKR-like family. MurNAc-6-P etherase subfamily. As to quaternary structure, homodimer.

It catalyses the reaction N-acetyl-D-muramate 6-phosphate + H2O = N-acetyl-D-glucosamine 6-phosphate + (R)-lactate. The protein operates within amino-sugar metabolism; 1,6-anhydro-N-acetylmuramate degradation. It participates in amino-sugar metabolism; N-acetylmuramate degradation. It functions in the pathway cell wall biogenesis; peptidoglycan recycling. Functionally, specifically catalyzes the cleavage of the D-lactyl ether substituent of MurNAc 6-phosphate, producing GlcNAc 6-phosphate and D-lactate. Together with AnmK, is also required for the utilization of anhydro-N-acetylmuramic acid (anhMurNAc) either imported from the medium or derived from its own cell wall murein, and thus plays a role in cell wall recycling. In Escherichia fergusonii (strain ATCC 35469 / DSM 13698 / CCUG 18766 / IAM 14443 / JCM 21226 / LMG 7866 / NBRC 102419 / NCTC 12128 / CDC 0568-73), this protein is N-acetylmuramic acid 6-phosphate etherase.